The following is a 389-amino-acid chain: Nuclear receptor subfamily 2 group F member 1-B (389 aa).

The interval 19-39 (DDQSAAGREHLQHRHSPKSAE) is disordered. Residues 51-126 (HVECVVCGDK…VGMRREAVQR (76 aa)) constitute a DNA-binding region (nuclear receptor). 2 consecutive NR C4-type zinc fingers follow at residues 54–74 (CVVCGDKSSGKHYGQFTCEGC) and 90–109 (CRANRNCPVDQHHRNQCQYC). Positions 152-378 (YLSGYISLLL…TLIRDMLLSG (227 aa)) constitute an NR LBD domain.

It belongs to the nuclear hormone receptor family. NR2 subfamily. In terms of tissue distribution, expressed the retina, where expression is restricted to the outer nuclear layer.

The protein resides in the nucleus. Its function is as follows. Putative transcription factor that is required in photoreceptor cells precursors during eye development. The protein is Nuclear receptor subfamily 2 group F member 1-B of Danio rerio (Zebrafish).